A 263-amino-acid polypeptide reads, in one-letter code: Complement C1q tumor necrosis factor-related protein 6 (263 aa).

The first 24 residues, 1–24 (MRVIMGTASLGSIWAVFLLPLVFG), serve as a signal peptide directing secretion. Asparagine 76 carries an N-linked (GlcNAc...) asparagine glycan. A disordered region spans residues 80 to 123 (LKGDKGDRGPSGTPGKPGKNGTRGDRGSQGIKGDKGQAGSPGSS). One can recognise a Collagen-like domain in the interval 82 to 123 (GDKGDRGPSGTPGKPGKNGTRGDRGSQGIKGDKGQAGSPGSS). Positions 124–263 (CQTHYSAFSV…SGHLIKAEDN (140 aa)) constitute a C1q domain.

The protein localises to the secreted. The protein is Complement C1q tumor necrosis factor-related protein 6 (C1qtnf6) of Rattus norvegicus (Rat).